The primary structure comprises 166 residues: Arginine repressor (166 aa).

Belongs to the ArgR family.

The protein localises to the cytoplasm. It participates in amino-acid biosynthesis; L-arginine biosynthesis [regulation]. Functionally, regulates arginine biosynthesis genes. The sequence is that of Arginine repressor from Mycobacterium ulcerans (strain Agy99).